A 97-amino-acid chain; its full sequence is Small ribosomal subunit protein bS20 (97 aa).

It belongs to the bacterial ribosomal protein bS20 family.

Functionally, binds directly to 16S ribosomal RNA. The chain is Small ribosomal subunit protein bS20 from Prochlorococcus marinus (strain MIT 9215).